Here is a 418-residue protein sequence, read N- to C-terminus: Putative ion-transport protein YfeO (418 aa).

A run of 12 helical transmembrane segments spans residues 10–30 (LLLSLPAVAIGIASSLILIVV), 54–74 (DSPFWIIAILTLTGIAVGLVI), 99–119 (ALPGLIVALILGLAGGVSLGP), 120–140 (EHPIMTVNIALAVAIGARLLP), 149–169 (ILASAGTIGALFGTPVAAALI), 186–206 (LFAPLMAAAAGALTTGLFFHP), 223–243 (ILSGAIVAAIAIAAGMVAVWC), 258–278 (VLMLGVGGFILGILGVIAGPV), 300–320 (DYFLLAVIKLAALVVAAASGF), 322–342 (GGRIFPAVFVGVALGLMLHEH), 343–363 (VPAVPAAITVSCAILGIVLVV), and 386–406 (LLCIVMLPAWLLLAGKPIMMV).

This sequence belongs to the chloride channel (TC 2.A.49) family.

The protein resides in the cell membrane. This is Putative ion-transport protein YfeO from Escherichia fergusonii (strain ATCC 35469 / DSM 13698 / CCUG 18766 / IAM 14443 / JCM 21226 / LMG 7866 / NBRC 102419 / NCTC 12128 / CDC 0568-73).